We begin with the raw amino-acid sequence, 283 residues long: NAD kinase (283 aa).

Asp67 acts as the Proton acceptor in catalysis. Residues 67 to 68, Arg72, 136 to 137, Lys147, Arg164, Asp166, 177 to 182, and Gln236 each bind NAD(+); these read DG, NE, and TAYSMS.

The protein belongs to the NAD kinase family. It depends on a divalent metal cation as a cofactor.

It localises to the cytoplasm. It carries out the reaction NAD(+) + ATP = ADP + NADP(+) + H(+). Involved in the regulation of the intracellular balance of NAD and NADP, and is a key enzyme in the biosynthesis of NADP. Catalyzes specifically the phosphorylation on 2'-hydroxyl of the adenosine moiety of NAD to yield NADP. This is NAD kinase from Methanothermobacter thermautotrophicus (strain ATCC 29096 / DSM 1053 / JCM 10044 / NBRC 100330 / Delta H) (Methanobacterium thermoautotrophicum).